Here is a 364-residue protein sequence, read N- to C-terminus: Aromatic prenyltransferase (364 aa).

The N-terminal stretch at 1-22 (MDRNQWTLALMALMRFAHRAFI) is a signal peptide. Residues Asn-142 and Asn-337 are each glycosylated (N-linked (GlcNAc...) asparagine).

This sequence belongs to the aromatic prenyltransferase family.

Functionally, prenyltransferase that attaches isoprenoid moieties to carbon atoms of aromatic substrates in an enzyme-catalyzed Friedel-Crafts reaction. The chain is Aromatic prenyltransferase from Talaromyces marneffei (strain ATCC 18224 / CBS 334.59 / QM 7333) (Penicillium marneffei).